The primary structure comprises 505 residues: 2,3-bisphosphoglycerate-independent phosphoglycerate mutase (505 aa).

Mn(2+)-binding residues include aspartate 12 and serine 62. Serine 62 functions as the Phosphoserine intermediate in the catalytic mechanism. Residues histidine 123, 153–154 (RD), arginine 185, arginine 191, 257–260 (RPDR), and lysine 330 contribute to the substrate site. The Mn(2+) site is built by aspartate 397, histidine 401, aspartate 438, histidine 439, and histidine 456.

Belongs to the BPG-independent phosphoglycerate mutase family. In terms of assembly, monomer. Mn(2+) is required as a cofactor.

It carries out the reaction (2R)-2-phosphoglycerate = (2R)-3-phosphoglycerate. It functions in the pathway carbohydrate degradation; glycolysis; pyruvate from D-glyceraldehyde 3-phosphate: step 3/5. Catalyzes the interconversion of 2-phosphoglycerate and 3-phosphoglycerate. This Staphylococcus haemolyticus (strain JCSC1435) protein is 2,3-bisphosphoglycerate-independent phosphoglycerate mutase.